A 350-amino-acid chain; its full sequence is Arginine N-succinyltransferase (350 aa).

Leu-125 serves as a coordination point for succinyl-CoA. His-229 (proton donor) is an active-site residue.

The protein belongs to the arginine N-succinyltransferase family.

The enzyme catalyses succinyl-CoA + L-arginine = N(2)-succinyl-L-arginine + CoA + H(+). Its pathway is amino-acid degradation; L-arginine degradation via AST pathway; L-glutamate and succinate from L-arginine: step 1/5. In terms of biological role, catalyzes the transfer of succinyl-CoA to arginine to produce N(2)-succinylarginine. This Yersinia pestis protein is Arginine N-succinyltransferase.